We begin with the raw amino-acid sequence, 393 residues long: uncharacterized protein (393 aa).

An ATP-binding site is contributed by 67-74 (GPDGMGKS).

This is an uncharacterized protein from Mycobacterium tuberculosis (strain CDC 1551 / Oshkosh).